The chain runs to 343 residues: NADH-quinone oxidoreductase subunit H (343 aa).

Transmembrane regions (helical) follow at residues 21–41 (WTLV…LFCV), 95–115 (FILA…VVPF), 124–144 (VNVG…GVLL), 172–192 (MGFT…GDIV), 197–217 (GLWY…SVVA), 257–277 (IIMV…PPIE), 281–301 (FIPG…FFLW), and 317–337 (LGWK…GLAM).

Belongs to the complex I subunit 1 family. In terms of assembly, NDH-1 is composed of 14 different subunits. Subunits NuoA, H, J, K, L, M, N constitute the membrane sector of the complex.

It is found in the cell inner membrane. It catalyses the reaction a quinone + NADH + 5 H(+)(in) = a quinol + NAD(+) + 4 H(+)(out). Functionally, NDH-1 shuttles electrons from NADH, via FMN and iron-sulfur (Fe-S) centers, to quinones in the respiratory chain. The immediate electron acceptor for the enzyme in this species is believed to be ubiquinone. Couples the redox reaction to proton translocation (for every two electrons transferred, four hydrogen ions are translocated across the cytoplasmic membrane), and thus conserves the redox energy in a proton gradient. This subunit may bind ubiquinone. The sequence is that of NADH-quinone oxidoreductase subunit H from Magnetococcus marinus (strain ATCC BAA-1437 / JCM 17883 / MC-1).